Reading from the N-terminus, the 555-residue chain is 2-succinyl-5-enolpyruvyl-6-hydroxy-3-cyclohexene-1-carboxylate synthase (555 aa).

The protein belongs to the TPP enzyme family. MenD subfamily. As to quaternary structure, homodimer. Mg(2+) serves as cofactor. Mn(2+) is required as a cofactor. The cofactor is thiamine diphosphate.

It carries out the reaction isochorismate + 2-oxoglutarate + H(+) = 5-enolpyruvoyl-6-hydroxy-2-succinyl-cyclohex-3-ene-1-carboxylate + CO2. Its pathway is quinol/quinone metabolism; 1,4-dihydroxy-2-naphthoate biosynthesis; 1,4-dihydroxy-2-naphthoate from chorismate: step 2/7. It participates in quinol/quinone metabolism; menaquinone biosynthesis. In terms of biological role, catalyzes the thiamine diphosphate-dependent decarboxylation of 2-oxoglutarate and the subsequent addition of the resulting succinic semialdehyde-thiamine pyrophosphate anion to isochorismate to yield 2-succinyl-5-enolpyruvyl-6-hydroxy-3-cyclohexene-1-carboxylate (SEPHCHC). This Kineococcus radiotolerans (strain ATCC BAA-149 / DSM 14245 / SRS30216) protein is 2-succinyl-5-enolpyruvyl-6-hydroxy-3-cyclohexene-1-carboxylate synthase.